A 398-amino-acid polypeptide reads, in one-letter code: NADH dehydrogenase [ubiquinone] iron-sulfur protein 2 (398 aa).

[4Fe-4S] cluster contacts are provided by cysteine 261, cysteine 267, and cysteine 282.

It belongs to the complex I 49 kDa subunit family. In terms of assembly, complex I is composed of about 45 different subunits. This is a component of the iron-sulfur (IP) fragment of the enzyme. The cofactor is [4Fe-4S] cluster.

It is found in the mitochondrion. It carries out the reaction a ubiquinone + NADH + 5 H(+)(in) = a ubiquinol + NAD(+) + 4 H(+)(out). Functionally, core subunit of the mitochondrial membrane respiratory chain NADH dehydrogenase (Complex I) that is believed to belong to the minimal assembly required for catalysis. Complex I functions in the transfer of electrons from NADH to the respiratory chain. The immediate electron acceptor for the enzyme is believed to be ubiquinone. Component of the iron-sulfur (IP) fragment of the enzyme. This Nephroselmis olivacea (Green alga) protein is NADH dehydrogenase [ubiquinone] iron-sulfur protein 2 (NAD7).